A 369-amino-acid chain; its full sequence is MWSGRKLGSSGGWFLRVLGPGGCNTKAARPLISSAVYVKNQLSGTLQIKPGVFNEYRTIWFKSYRTIFSCLNRIKSFRYPWARLYSTSQTTVDSGEVKTFLALAHKWWDEQGVYAPLHSMNDLRVPFIRDNLLKTIPNHQPGKPLLGMKILDVGCGGGLLTEPLGRLGASVIGIDPVDENIKTAQCHKSFDPVLDKRIEYRVCSLEEIVEETAETFDAVVASEVVEHVIDLETFLQCCCQVLKPGGSLFITTINKTQLSYALGIVFSEQIASIVPKGTHTWEKFVSPETLESILESNGLSVQTVVGMLYNPFSGYWHWSENTSLNYAAYAVKSRVQEHPASAEFVLKGETEELQANACTNPAVHEKLKK.

Residues 1-85 (MWSGRKLGSS…SFRYPWARLY (85 aa)) constitute a mitochondrion transit peptide. Arg124 is an S-adenosyl-L-methionine binding site. An N6-acetyllysine mark is found at Lys143 and Lys149. Residues Gly154 and Asp175 each coordinate S-adenosyl-L-methionine. Lys196 is modified (N6-acetyllysine). Position 222 (Ser222) interacts with S-adenosyl-L-methionine. 3 residues coordinate Mg(2+): Glu223, Glu226, and His227.

The protein belongs to the class I-like SAM-binding methyltransferase superfamily. UbiG/COQ3 family. Component of a multi-subunit COQ enzyme complex, composed of at least COQ3, COQ4, COQ5, COQ6, COQ7 and COQ9. Mg(2+) serves as cofactor.

It localises to the mitochondrion inner membrane. The catalysed reaction is 3,4-dihydroxy-5-(all-trans-decaprenyl)benzoate + S-adenosyl-L-methionine = 4-hydroxy-3-methoxy-5-(all-trans-decaprenyl)benzoate + S-adenosyl-L-homocysteine + H(+). It carries out the reaction a 3-demethylubiquinone + S-adenosyl-L-methionine = a ubiquinone + S-adenosyl-L-homocysteine. It catalyses the reaction 3-demethylubiquinol-10 + S-adenosyl-L-methionine = ubiquinol-10 + S-adenosyl-L-homocysteine + H(+). The protein operates within cofactor biosynthesis; ubiquinone biosynthesis. In terms of biological role, O-methyltransferase required for two non-consecutive steps during ubiquinone biosynthesis. Catalyzes the 2 O-methylation of 3,4-dihydroxy-5-(all-trans-decaprenyl)benzoic acid into 4-hydroxy-3-methoxy-5-(all-trans-decaprenyl)benzoic acid. Also catalyzes the last step of ubiquinone biosynthesis by mediating methylation of 3-demethylubiquinone into ubiquinone. Also able to mediate the methylation of 3-demethylubiquinol-10 into ubiquinol-10. The chain is Ubiquinone biosynthesis O-methyltransferase, mitochondrial from Homo sapiens (Human).